Consider the following 322-residue polypeptide: Uridylate-specific endoribonuclease EndoU (322 aa).

Residues F25–F45 form a helical membrane-spanning segment. One can recognise an EndoU domain in the interval T53–S322. Residues H200, H215, and K259 contribute to the active site.

Belongs to the ENDOU family. In terms of assembly, monomer. Mn(2+) serves as cofactor. Predominantly expressed in head.

It is found in the membrane. The catalysed reaction is a ribonucleotidyl-ribonucleotide-RNA = a 3'-end 2',3'-cyclophospho-ribonucleotide-RNA + a 5'-end dephospho-ribonucleoside-RNA. Endoribonuclease that cleaves single-stranded RNAs at uridylates and releases products that have 2'-3'-cyclic phosphate termini. Preferentially cleaves single stranded RNA at poly-U sites with CU, UC and AU sites cleaved less efficiently. May target mRNAs encoding proteins involved in lipid metabolism to regulate their expression. Regulates levels of TBPH protein, but not mRNA, by an as yet unknown mechanism. Important for neuronal development or function. This chain is Uridylate-specific endoribonuclease EndoU, found in Drosophila melanogaster (Fruit fly).